A 165-amino-acid polypeptide reads, in one-letter code: Large ribosomal subunit protein uL10 (165 aa).

The protein belongs to the universal ribosomal protein uL10 family. As to quaternary structure, part of the ribosomal stalk of the 50S ribosomal subunit. The N-terminus interacts with L11 and the large rRNA to form the base of the stalk. The C-terminus forms an elongated spine to which L12 dimers bind in a sequential fashion forming a multimeric L10(L12)X complex.

Functionally, forms part of the ribosomal stalk, playing a central role in the interaction of the ribosome with GTP-bound translation factors. This is Large ribosomal subunit protein uL10 from Borrelia turicatae (strain 91E135).